The chain runs to 314 residues: 4-hydroxy-3-methylbut-2-enyl diphosphate reductase (314 aa).

Cys12 is a binding site for [4Fe-4S] cluster. (2E)-4-hydroxy-3-methylbut-2-enyl diphosphate contacts are provided by His41 and His74. Residues His41 and His74 each coordinate dimethylallyl diphosphate. His41 and His74 together coordinate isopentenyl diphosphate. Position 96 (Cys96) interacts with [4Fe-4S] cluster. A (2E)-4-hydroxy-3-methylbut-2-enyl diphosphate-binding site is contributed by His124. His124 lines the dimethylallyl diphosphate pocket. His124 provides a ligand contact to isopentenyl diphosphate. Catalysis depends on Glu126, which acts as the Proton donor. Residue Thr167 participates in (2E)-4-hydroxy-3-methylbut-2-enyl diphosphate binding. Cys197 serves as a coordination point for [4Fe-4S] cluster. Positions 225, 226, 227, and 269 each coordinate (2E)-4-hydroxy-3-methylbut-2-enyl diphosphate. 4 residues coordinate dimethylallyl diphosphate: Ser225, Ser226, Asn227, and Ser269. Residues Ser225, Ser226, Asn227, and Ser269 each contribute to the isopentenyl diphosphate site.

This sequence belongs to the IspH family. Requires [4Fe-4S] cluster as cofactor.

The catalysed reaction is isopentenyl diphosphate + 2 oxidized [2Fe-2S]-[ferredoxin] + H2O = (2E)-4-hydroxy-3-methylbut-2-enyl diphosphate + 2 reduced [2Fe-2S]-[ferredoxin] + 2 H(+). The enzyme catalyses dimethylallyl diphosphate + 2 oxidized [2Fe-2S]-[ferredoxin] + H2O = (2E)-4-hydroxy-3-methylbut-2-enyl diphosphate + 2 reduced [2Fe-2S]-[ferredoxin] + 2 H(+). It participates in isoprenoid biosynthesis; dimethylallyl diphosphate biosynthesis; dimethylallyl diphosphate from (2E)-4-hydroxy-3-methylbutenyl diphosphate: step 1/1. Its pathway is isoprenoid biosynthesis; isopentenyl diphosphate biosynthesis via DXP pathway; isopentenyl diphosphate from 1-deoxy-D-xylulose 5-phosphate: step 6/6. Its function is as follows. Catalyzes the conversion of 1-hydroxy-2-methyl-2-(E)-butenyl 4-diphosphate (HMBPP) into a mixture of isopentenyl diphosphate (IPP) and dimethylallyl diphosphate (DMAPP). Acts in the terminal step of the DOXP/MEP pathway for isoprenoid precursor biosynthesis. The protein is 4-hydroxy-3-methylbut-2-enyl diphosphate reductase of Haemophilus influenzae (strain 86-028NP).